Here is a 319-residue protein sequence, read N- to C-terminus: Alpha/beta-gliadin A-V (319 aa).

A signal peptide spans 1-20 (MKTFLILALLAIVATTATTA). The span at 28-58 (LQPQNPSQQQPQEQVPLVQQQQFPGQQQQFP) shows a compositional bias: low complexity. 2 disordered regions span residues 28–125 (LQPQ…QQAQ) and 258–278 (SQVSFQPSQLNPQAQGSVQPQ). Pro residues-rich tracts occupy residues 59 to 71 (PQQPYPQPQPFPS) and 81 to 104 (FPQPQPFPPQLPYPQPQSFPPQQP). Low complexity predominate over residues 105–125 (YPQQQPQYLQPQQPISQQQAQ). The segment covering 267 to 278 (LNPQAQGSVQPQ) has biased composition (polar residues).

It belongs to the gliadin/glutenin family. Substrate of transglutaminase.

Its function is as follows. Gliadin is the major seed storage protein in wheat. This Triticum aestivum (Wheat) protein is Alpha/beta-gliadin A-V.